A 426-amino-acid polypeptide reads, in one-letter code: Enolase (426 aa).

Gln165 is a (2R)-2-phosphoglycerate binding site. Glu209 (proton donor) is an active-site residue. Mg(2+)-binding residues include Asp244, Glu287, and Asp313. Lys338, Arg367, Ser368, and Lys389 together coordinate (2R)-2-phosphoglycerate. Residue Lys338 is the Proton acceptor of the active site.

Belongs to the enolase family. The cofactor is Mg(2+).

It localises to the cytoplasm. It is found in the secreted. Its subcellular location is the cell surface. The catalysed reaction is (2R)-2-phosphoglycerate = phosphoenolpyruvate + H2O. The protein operates within carbohydrate degradation; glycolysis; pyruvate from D-glyceraldehyde 3-phosphate: step 4/5. In terms of biological role, catalyzes the reversible conversion of 2-phosphoglycerate (2-PG) into phosphoenolpyruvate (PEP). It is essential for the degradation of carbohydrates via glycolysis. The sequence is that of Enolase from Methanococcus maripaludis (strain DSM 14266 / JCM 13030 / NBRC 101832 / S2 / LL).